The sequence spans 276 residues: MISQQSAKHIENQWLALEIGNSRLHWALFMGESLEFTWDTEYLPESVIQQLGNGETKLEVGSEEKEIFFTFFPLPPAPCPLPLFIASVVPQQTVLWENYLNVRVITLDQIPLNNIYPTLGIDRALALWGAGMSWGFPVLVIDAGTALTFTAADGGKNLVGGAILPGVGLQFASLGQQTGQLPQVEMEAIKSLPPRFALNTTEAIQSGVIYTLIAGMRDFTEEWLSLFPDGKVAIKGGDRILLLNYLQALYPDLAARLIVEPNLIFWGMQTIVAGVA.

Residue 18 to 25 (EIGNSRLH) coordinates ATP. Residues Tyr116 and 120–123 (GIDR) contribute to the substrate site. Catalysis depends on Asp122, which acts as the Proton acceptor. Asp142 is a binding site for K(+). Thr145 contributes to the ATP binding site. Thr200 lines the substrate pocket.

The protein belongs to the type III pantothenate kinase family. In terms of assembly, homodimer. It depends on NH4(+) as a cofactor. K(+) serves as cofactor.

The protein resides in the cytoplasm. The enzyme catalyses (R)-pantothenate + ATP = (R)-4'-phosphopantothenate + ADP + H(+). It participates in cofactor biosynthesis; coenzyme A biosynthesis; CoA from (R)-pantothenate: step 1/5. Its function is as follows. Catalyzes the phosphorylation of pantothenate (Pan), the first step in CoA biosynthesis. The protein is Type III pantothenate kinase of Nostoc sp. (strain PCC 7120 / SAG 25.82 / UTEX 2576).